The chain runs to 294 residues: Acetyl-coenzyme A carboxylase carboxyl transferase subunit beta (294 aa).

The 265-residue stretch at 30 to 294 folds into the CoA carboxyltransferase N-terminal domain; it reads IMTKCPECKK…PETGGESDGE (265 aa). Zn(2+) is bound by residues cysteine 34, cysteine 37, cysteine 53, and cysteine 56. A C4-type zinc finger spans residues 34–56; sequence CPECKKIMYTKELQKNLMVCNYC.

The protein belongs to the AccD/PCCB family. In terms of assembly, acetyl-CoA carboxylase is a heterohexamer composed of biotin carboxyl carrier protein (AccB), biotin carboxylase (AccC) and two subunits each of ACCase subunit alpha (AccA) and ACCase subunit beta (AccD). The cofactor is Zn(2+).

Its subcellular location is the cytoplasm. It catalyses the reaction N(6)-carboxybiotinyl-L-lysyl-[protein] + acetyl-CoA = N(6)-biotinyl-L-lysyl-[protein] + malonyl-CoA. It participates in lipid metabolism; malonyl-CoA biosynthesis; malonyl-CoA from acetyl-CoA: step 1/1. Component of the acetyl coenzyme A carboxylase (ACC) complex. Biotin carboxylase (BC) catalyzes the carboxylation of biotin on its carrier protein (BCCP) and then the CO(2) group is transferred by the transcarboxylase to acetyl-CoA to form malonyl-CoA. The sequence is that of Acetyl-coenzyme A carboxylase carboxyl transferase subunit beta from Listeria welshimeri serovar 6b (strain ATCC 35897 / DSM 20650 / CCUG 15529 / CIP 8149 / NCTC 11857 / SLCC 5334 / V8).